A 450-amino-acid chain; its full sequence is MNLNDILKELKLSLIANKNIDESVYNDYIKTINIYKKDLSNYVVVVKSQFGLLAIKQFRPTIENEIKKILKQPVNISFTYEQEYQKQLEKTESINKDHSDIISKKNKKVNENTFENFVIGSSNEQAFIAVQTVSKNPGISYNPLFIYGESGMGKTHLLKAAKNYIESNFSDLKVSYMSGDEFARKAVDILQKTHKEIEQFKNEVCQNDVLIIDDVQFLSYKEKTNEIFFTIFNNFIENDKQLFFSSDKSPELLNGFDNRLITRFNMGLSIAIQKLDNKTATAIIKKEIKNQNIKTEVTNEAINFISNYYSDDVRKIKGSVSRLNFWSQQNPEEKVITIEIISDLFRDIPTSKLGILNVKKIKEVVSEKYGISVNAIDGKARSKSIVTARHIAMYLTKEILNHTLAQIGEEFGGRDHTTVINAERKIEMMLKKDKQLKKTVDILKNKILTK.

The domain I, interacts with DnaA modulators stretch occupies residues 1–76 (MNLNDILKEL…KKILKQPVNI (76 aa)). The segment at 76 to 107 (ISFTYEQEYQKQLEKTESINKDHSDIISKKNK) is domain II. The tract at residues 108–327 (KVNENTFENF…GSVSRLNFWS (220 aa)) is domain III, AAA+ region. ATP is bound by residues Gly-151, Gly-153, Lys-154, and Thr-155. The domain IV, binds dsDNA stretch occupies residues 328 to 450 (QQNPEEKVIT…DILKNKILTK (123 aa)).

It belongs to the DnaA family. Oligomerizes as a right-handed, spiral filament on DNA at oriC.

Its subcellular location is the cytoplasm. It localises to the cell membrane. Functionally, plays an essential role in the initiation and regulation of chromosomal replication. ATP-DnaA binds to the origin of replication (oriC) to initiate formation of the DNA replication initiation complex once per cell cycle. Binds the DnaA box (a 9 base pair repeat at the origin) and separates the double-stranded (ds)DNA. Forms a right-handed helical filament on oriC DNA; dsDNA binds to the exterior of the filament while single-stranded (ss)DNA is stabiized in the filament's interior. The ATP-DnaA-oriC complex binds and stabilizes one strand of the AT-rich DNA unwinding element (DUE), permitting loading of DNA polymerase. After initiation quickly degrades to an ADP-DnaA complex that is not apt for DNA replication. Binds acidic phospholipids. This is Chromosomal replication initiator protein DnaA from Mycoplasma capricolum subsp. capricolum (strain California kid / ATCC 27343 / NCTC 10154).